The sequence spans 214 residues: ATP phosphoribosyltransferase (214 aa).

Belongs to the ATP phosphoribosyltransferase family. Short subfamily. In terms of assembly, heteromultimer composed of HisG and HisZ subunits.

The protein resides in the cytoplasm. It carries out the reaction 1-(5-phospho-beta-D-ribosyl)-ATP + diphosphate = 5-phospho-alpha-D-ribose 1-diphosphate + ATP. The protein operates within amino-acid biosynthesis; L-histidine biosynthesis; L-histidine from 5-phospho-alpha-D-ribose 1-diphosphate: step 1/9. In terms of biological role, catalyzes the condensation of ATP and 5-phosphoribose 1-diphosphate to form N'-(5'-phosphoribosyl)-ATP (PR-ATP). Has a crucial role in the pathway because the rate of histidine biosynthesis seems to be controlled primarily by regulation of HisG enzymatic activity. This Methylobacillus flagellatus (strain ATCC 51484 / DSM 6875 / VKM B-1610 / KT) protein is ATP phosphoribosyltransferase.